A 278-amino-acid chain; its full sequence is Probable septum site-determining protein MinC (278 aa).

It belongs to the MinC family. As to quaternary structure, interacts with MinD and FtsZ.

Its function is as follows. Cell division inhibitor that blocks the formation of polar Z ring septums. Rapidly oscillates between the poles of the cell to destabilize FtsZ filaments that have formed before they mature into polar Z rings. Prevents FtsZ polymerization. The polypeptide is Probable septum site-determining protein MinC (Gloeobacter violaceus (strain ATCC 29082 / PCC 7421)).